Reading from the N-terminus, the 96-residue chain is Large ribosomal subunit protein bL28 (96 aa).

The protein belongs to the bacterial ribosomal protein bL28 family.

The polypeptide is Large ribosomal subunit protein bL28 (Orientia tsutsugamushi (strain Boryong) (Rickettsia tsutsugamushi)).